The following is a 904-amino-acid chain: Auxilin-related protein 1 (904 aa).

Disordered regions lie at residues 46–99, 150–731, and 749–776; these read AAGK…FDYD, SSIS…NLRK, and SASQ…RHQR. The span at 59 to 69 shows a compositional bias: basic and acidic residues; the sequence is DPGRDGDDLLF. A compositionally biased stretch (low complexity) spans 81–95; the sequence is YGSSSGDSRSPSAPA. The span at 178-188 shows a compositional bias: basic and acidic residues; that stretch reads KGADSDREEKG. The span at 201 to 215 shows a compositional bias: low complexity; the sequence is RTSSPPSKRTTSETT. A compositionally biased stretch (acidic residues) spans 232–244; it reads VEEDPFVVLEESE. Residues 245-271 are compositionally biased toward basic and acidic residues; that stretch reads STPREPSRTDPLDDIGKFNSRKTDHSS. Residues 370–383 show a composition bias toward pro residues; the sequence is SAPPPTRPPPPRPT. The span at 394–419 shows a compositional bias: polar residues; that stretch reads SIPTSAYHSHVPSSGRASVNSPTASQ. A coiled-coil region spans residues 456–663; sequence SAAAMKDAMD…AAAEARGRAA (208 aa). 2 stretches are compositionally biased toward basic and acidic residues: residues 462–570 and 581–660; these read DAMD…EAHA and TDAR…EARG. The R domain occupies 619 to 640; it reads REKAEKAAAEAKERANAEAREK. Residues 661–673 show a composition bias toward low complexity; that stretch reads RAAAQAKAKQQQE. The span at 674–697 shows a compositional bias: polar residues; the sequence is NTNDLDSFFSSISRPNSAPRQRTN. A coiled-coil region spans residues 762–804; that stretch reads ETEERRRARLERHQRTQERAAKALAEKNERDLQVQREQVEKDR. Residues 764–776 show a composition bias toward basic and acidic residues; that stretch reads EERRRARLERHQR. Residues 839-904 enclose the J domain; it reads CGWQPVSLTD…WNKFNSEELF (66 aa).

Interacts with SH3P1.

The protein localises to the cell membrane. It is found in the golgi apparatus. The protein resides in the trans-Golgi network. It localises to the endoplasmic reticulum. Its subcellular location is the cytoplasmic vesicle. In terms of biological role, promotes uncoating of clathrin-coated vesicles. May interact directly with clathrin. This is Auxilin-related protein 1 from Arabidopsis thaliana (Mouse-ear cress).